Consider the following 890-residue polypeptide: Alanine--tRNA ligase (890 aa).

The Zn(2+) site is built by histidine 572, histidine 576, cysteine 674, and histidine 678.

The protein belongs to the class-II aminoacyl-tRNA synthetase family. Requires Zn(2+) as cofactor.

It is found in the cytoplasm. The catalysed reaction is tRNA(Ala) + L-alanine + ATP = L-alanyl-tRNA(Ala) + AMP + diphosphate. Its function is as follows. Catalyzes the attachment of alanine to tRNA(Ala) in a two-step reaction: alanine is first activated by ATP to form Ala-AMP and then transferred to the acceptor end of tRNA(Ala). Also edits incorrectly charged Ser-tRNA(Ala) and Gly-tRNA(Ala) via its editing domain. In Saccharopolyspora erythraea (strain ATCC 11635 / DSM 40517 / JCM 4748 / NBRC 13426 / NCIMB 8594 / NRRL 2338), this protein is Alanine--tRNA ligase.